A 449-amino-acid polypeptide reads, in one-letter code: UDP-N-acetylmuramate--L-alanine ligase (449 aa).

121 to 127 (GAHGKSS) is a binding site for ATP.

The protein belongs to the MurCDEF family.

The protein resides in the cytoplasm. The enzyme catalyses UDP-N-acetyl-alpha-D-muramate + L-alanine + ATP = UDP-N-acetyl-alpha-D-muramoyl-L-alanine + ADP + phosphate + H(+). It functions in the pathway cell wall biogenesis; peptidoglycan biosynthesis. Its function is as follows. Cell wall formation. This chain is UDP-N-acetylmuramate--L-alanine ligase, found in Helicobacter pylori (strain HPAG1).